Here is a 224-residue protein sequence, read N- to C-terminus: Thiamine-phosphate synthase (224 aa).

4-amino-2-methyl-5-(diphosphooxymethyl)pyrimidine contacts are provided by residues 44–48 and asparagine 79; that span reads QFREK. Positions 80 and 99 each coordinate Mg(2+). Serine 117 is a binding site for 4-amino-2-methyl-5-(diphosphooxymethyl)pyrimidine. 2-[(2R,5Z)-2-carboxy-4-methylthiazol-5(2H)-ylidene]ethyl phosphate is bound at residue 143–145; that stretch reads TET. Residue lysine 146 participates in 4-amino-2-methyl-5-(diphosphooxymethyl)pyrimidine binding. 2-[(2R,5Z)-2-carboxy-4-methylthiazol-5(2H)-ylidene]ethyl phosphate-binding positions include glycine 175 and 195–196; that span reads IS.

It belongs to the thiamine-phosphate synthase family. The cofactor is Mg(2+).

The catalysed reaction is 2-[(2R,5Z)-2-carboxy-4-methylthiazol-5(2H)-ylidene]ethyl phosphate + 4-amino-2-methyl-5-(diphosphooxymethyl)pyrimidine + 2 H(+) = thiamine phosphate + CO2 + diphosphate. It catalyses the reaction 2-(2-carboxy-4-methylthiazol-5-yl)ethyl phosphate + 4-amino-2-methyl-5-(diphosphooxymethyl)pyrimidine + 2 H(+) = thiamine phosphate + CO2 + diphosphate. It carries out the reaction 4-methyl-5-(2-phosphooxyethyl)-thiazole + 4-amino-2-methyl-5-(diphosphooxymethyl)pyrimidine + H(+) = thiamine phosphate + diphosphate. It participates in cofactor biosynthesis; thiamine diphosphate biosynthesis; thiamine phosphate from 4-amino-2-methyl-5-diphosphomethylpyrimidine and 4-methyl-5-(2-phosphoethyl)-thiazole: step 1/1. In terms of biological role, condenses 4-methyl-5-(beta-hydroxyethyl)thiazole monophosphate (THZ-P) and 2-methyl-4-amino-5-hydroxymethyl pyrimidine pyrophosphate (HMP-PP) to form thiamine monophosphate (TMP). This is Thiamine-phosphate synthase from Bacillus velezensis (strain DSM 23117 / BGSC 10A6 / LMG 26770 / FZB42) (Bacillus amyloliquefaciens subsp. plantarum).